The primary structure comprises 156 residues: Small ribosomal subunit protein uS7 (156 aa).

Belongs to the universal ribosomal protein uS7 family. Part of the 30S ribosomal subunit. Contacts proteins S9 and S11.

In terms of biological role, one of the primary rRNA binding proteins, it binds directly to 16S rRNA where it nucleates assembly of the head domain of the 30S subunit. Is located at the subunit interface close to the decoding center, probably blocks exit of the E-site tRNA. This is Small ribosomal subunit protein uS7 from Nitrobacter winogradskyi (strain ATCC 25391 / DSM 10237 / CIP 104748 / NCIMB 11846 / Nb-255).